Consider the following 146-residue polypeptide: Acidic phospholipase A2 D (146 aa).

An N-terminal signal peptide occupies residues 1 to 21; that stretch reads MNPAHLLILAAVCVSPLGASS. The propeptide occupies 22–27; sequence NRPMPL. Intrachain disulfides connect Cys38–Cys98, Cys53–Cys145, Cys55–Cys71, Cys70–Cys126, Cys77–Cys119, Cys87–Cys112, and Cys105–Cys117. Ca(2+) is bound by residues Tyr54, Gly56, and Gly58. The active site involves His74. Asp75 lines the Ca(2+) pocket. Residue Asp120 is part of the active site.

It belongs to the phospholipase A2 family. Group I subfamily. D49 sub-subfamily. Ca(2+) is required as a cofactor. As to expression, expressed by the venom gland.

It is found in the secreted. The catalysed reaction is a 1,2-diacyl-sn-glycero-3-phosphocholine + H2O = a 1-acyl-sn-glycero-3-phosphocholine + a fatty acid + H(+). Its function is as follows. PLA2 catalyzes the calcium-dependent hydrolysis of the 2-acyl groups in 3-sn-phosphoglycerides. The protein is Acidic phospholipase A2 D of Naja sputatrix (Malayan spitting cobra).